The primary structure comprises 400 residues: Phosphoglycerate kinase (400 aa).

Substrate is bound by residues 21–23 (DFN), arginine 36, 59–62 (HLGR), arginine 118, and arginine 151. ATP is bound by residues lysine 201, glycine 293, glutamate 324, and 353–356 (GGDS).

This sequence belongs to the phosphoglycerate kinase family. As to quaternary structure, monomer.

It is found in the cytoplasm. The catalysed reaction is (2R)-3-phosphoglycerate + ATP = (2R)-3-phospho-glyceroyl phosphate + ADP. It functions in the pathway carbohydrate degradation; glycolysis; pyruvate from D-glyceraldehyde 3-phosphate: step 2/5. In Fervidobacterium nodosum (strain ATCC 35602 / DSM 5306 / Rt17-B1), this protein is Phosphoglycerate kinase.